The following is a 338-amino-acid chain: Ketol-acid reductoisomerase (NADP(+)) (338 aa).

Positions 1–181 constitute a KARI N-terminal Rossmann domain; sequence MQVYYDKDAD…GGGRAGVIET (181 aa). NADP(+) contacts are provided by residues 24–27, arginine 47, serine 50, serine 52, and 82–85; these read YGSQ and DEHQ. The active site involves histidine 107. Glycine 133 serves as a coordination point for NADP(+). One can recognise a KARI C-terminal knotted domain in the interval 182 to 327; it reads SFKDETETDL…AKLRDMMPWI (146 aa). Residues aspartate 190, glutamate 194, glutamate 226, and glutamate 230 each contribute to the Mg(2+) site. Residue serine 251 participates in substrate binding.

This sequence belongs to the ketol-acid reductoisomerase family. The cofactor is Mg(2+).

The catalysed reaction is (2R)-2,3-dihydroxy-3-methylbutanoate + NADP(+) = (2S)-2-acetolactate + NADPH + H(+). The enzyme catalyses (2R,3R)-2,3-dihydroxy-3-methylpentanoate + NADP(+) = (S)-2-ethyl-2-hydroxy-3-oxobutanoate + NADPH + H(+). The protein operates within amino-acid biosynthesis; L-isoleucine biosynthesis; L-isoleucine from 2-oxobutanoate: step 2/4. Its pathway is amino-acid biosynthesis; L-valine biosynthesis; L-valine from pyruvate: step 2/4. Its function is as follows. Involved in the biosynthesis of branched-chain amino acids (BCAA). Catalyzes an alkyl-migration followed by a ketol-acid reduction of (S)-2-acetolactate (S2AL) to yield (R)-2,3-dihydroxy-isovalerate. In the isomerase reaction, S2AL is rearranged via a Mg-dependent methyl migration to produce 3-hydroxy-3-methyl-2-ketobutyrate (HMKB). In the reductase reaction, this 2-ketoacid undergoes a metal-dependent reduction by NADPH to yield (R)-2,3-dihydroxy-isovalerate. The protein is Ketol-acid reductoisomerase (NADP(+)) of Thioalkalivibrio sulfidiphilus (strain HL-EbGR7).